We begin with the raw amino-acid sequence, 90 residues long: UPF0335 protein RPA4190 (90 aa).

The protein belongs to the UPF0335 family.

This chain is UPF0335 protein RPA4190, found in Rhodopseudomonas palustris (strain ATCC BAA-98 / CGA009).